A 1511-amino-acid chain; its full sequence is ATP-dependent permease PDR12 (1511 aa).

Basic and acidic residues predominate over residues 1–21 (MSSTDEHIEKDISSRSNHDDD). Positions 1 to 37 (MSSTDEHIEKDISSRSNHDDDYANSVQSYAASEGQVD) are disordered. S2 is modified (N-acetylserine). At 2–508 (SSTDEHIEKD…RGFQRVKGDS (507 aa)) the chain is on the cytoplasmic side. Phosphoserine occurs at positions 32, 52, and 56. The 254-residue stretch at 144 to 397 (IPAHLISKFT…FQRMGWVKPN (254 aa)) folds into the ABC transporter 1 domain. Residue K426 forms a Glycyl lysine isopeptide (Lys-Gly) (interchain with G-Cter in ubiquitin) linkage. A helical membrane pass occupies residues 509 to 529 (TYTKVYLSSFLIKALIIGSMF). Over 530 to 548 (HKIDDKSQSTTAGAYSRGG) the chain is Extracellular. The helical transmembrane segment at 549 to 569 (MLFYVLLFASVTSLAEIGNSF) threads the bilayer. Residues 570–597 (SSRPVIVKHKSYSMYHLSAESLQEIITE) lie on the Cytoplasmic side of the membrane. A helical transmembrane segment spans residues 598-618 (FPTKFVAIVILCLITYWIPFM). Over 619 to 622 (KYEA) the chain is Extracellular. Residues 623 to 643 (GAFFQYILYLLTVQQCTSFIF) form a helical membrane-spanning segment. Over 644–657 (KFVATMSKSGVDAH) the chain is Cytoplasmic. The chain crosses the membrane as a helical span at residues 658–678 (AVGGLWVLMLCVYAGFVLPIG). At 679 to 765 (EMHHWIRWLH…FAYKHAWRNW (87 aa)) the chain is on the extracellular side. A helical transmembrane segment spans residues 766–786 (GVNIVWTFGYIVFNVILSEYL). Residues 787-1182 (KPVEGGGDLL…WRSPVYIRAK (396 aa)) lie on the Cytoplasmic side of the membrane. One can recognise an ABC transporter 2 domain in the interval 836-1084 (IAEKDVFTWN…TLLKYFERQS (249 aa)). Residues 878–885 (GESGAGKT) and 972–979 (AEALVGKT) contribute to the ATP site. The chain crosses the membrane as a helical span at residues 1183 to 1203 (FFECVACALFVGLSYVGVNHS). Residue V1204 is a topological domain, extracellular. Residues 1205–1225 (GGAIEAFSSIFMLLLIALAMI) form a helical membrane-spanning segment. The Cytoplasmic portion of the chain corresponds to 1226-1254 (NQLHVFAYDSRELYEVREAASNTFHWSVL). Residues 1255–1275 (LLCHAAVENFWSTLCQFMCFI) form a helical membrane-spanning segment. Residues 1276–1291 (CYYWPAQFSGRASHAG) lie on the Extracellular side of the membrane. A helical transmembrane segment spans residues 1292–1312 (FFFFFYVLIFPLYFVTYGLWI). Over 1313 to 1318 (LYMSPD) the chain is Cytoplasmic. The chain crosses the membrane as a helical span at residues 1319-1339 (VPSASMINSNLFAAMLLFCGI). Residues 1340-1444 (LQPREKMPAF…NVKWDHRWRN (105 aa)) are Extracellular-facing. A glycan (N-linked (GlcNAc...) asparagine) is linked at N1405. A helical transmembrane segment spans residues 1445–1465 (FGFMWAYICFNIAAMLICYYV). At 1466 to 1511 (VRVKVWSLKSVLNFKKWFNGPRKERHEKDTNIFQTVPGDENKITKK) the chain is on the cytoplasmic side.

The protein belongs to the ABC transporter superfamily. ABCG family. PDR (TC 3.A.1.205) subfamily.

It is found in the cell membrane. In terms of biological role, plasma membrane transporter which mediates resistance to water-soluble, monocarboxylic acids with chain lengths of from C1 to C7 by active extrusion of the preservative anions from the cytosol. Also involved in the export of aromatic and branched-chain organic acids produced in amino acid catabolism. The protein is ATP-dependent permease PDR12 (PDR12) of Saccharomyces cerevisiae (strain ATCC 204508 / S288c) (Baker's yeast).